The following is a 64-amino-acid chain: MPKMKSHRGACKRFKVTASGKIKRERMNGSHNLEKKNRKRSRRLHQSTLLEGTKAKQIKQMIQG.

Belongs to the bacterial ribosomal protein bL35 family.

This Chlorobium chlorochromatii (strain CaD3) protein is Large ribosomal subunit protein bL35.